A 292-amino-acid polypeptide reads, in one-letter code: 33 kDa chaperonin (292 aa).

2 cysteine pairs are disulfide-bonded: cysteine 238–cysteine 240 and cysteine 271–cysteine 274.

It belongs to the HSP33 family. Post-translationally, under oxidizing conditions two disulfide bonds are formed involving the reactive cysteines. Under reducing conditions zinc is bound to the reactive cysteines and the protein is inactive.

Its subcellular location is the cytoplasm. Functionally, redox regulated molecular chaperone. Protects both thermally unfolding and oxidatively damaged proteins from irreversible aggregation. Plays an important role in the bacterial defense system toward oxidative stress. The polypeptide is 33 kDa chaperonin (Alkaliphilus metalliredigens (strain QYMF)).